The chain runs to 209 residues: Leucyl/phenylalanyl-tRNA--protein transferase (209 aa).

Belongs to the L/F-transferase family.

The protein localises to the cytoplasm. It catalyses the reaction N-terminal L-lysyl-[protein] + L-leucyl-tRNA(Leu) = N-terminal L-leucyl-L-lysyl-[protein] + tRNA(Leu) + H(+). The catalysed reaction is N-terminal L-arginyl-[protein] + L-leucyl-tRNA(Leu) = N-terminal L-leucyl-L-arginyl-[protein] + tRNA(Leu) + H(+). It carries out the reaction L-phenylalanyl-tRNA(Phe) + an N-terminal L-alpha-aminoacyl-[protein] = an N-terminal L-phenylalanyl-L-alpha-aminoacyl-[protein] + tRNA(Phe). Its function is as follows. Functions in the N-end rule pathway of protein degradation where it conjugates Leu, Phe and, less efficiently, Met from aminoacyl-tRNAs to the N-termini of proteins containing an N-terminal arginine or lysine. This is Leucyl/phenylalanyl-tRNA--protein transferase from Paramagnetospirillum magneticum (strain ATCC 700264 / AMB-1) (Magnetospirillum magneticum).